Reading from the N-terminus, the 176-residue chain is Probable DNA-directed RNA polymerase subunit delta (176 aa).

One can recognise an HTH HARE-type domain in the interval lysine 14–tryptophan 81. The disordered stretch occupies residues leucine 114–aspartate 176. 2 stretches are compositionally biased toward acidic residues: residues glutamate 116 to glutamate 145 and valine 153 to aspartate 176.

Belongs to the RpoE family. In terms of assembly, RNAP is composed of a core of 2 alpha, a beta and a beta' subunits. The core is associated with a delta subunit and one of several sigma factors.

In terms of biological role, participates in both the initiation and recycling phases of transcription. In the presence of the delta subunit, RNAP displays an increased specificity of transcription, a decreased affinity for nucleic acids, and an increased efficiency of RNA synthesis because of enhanced recycling. The protein is Probable DNA-directed RNA polymerase subunit delta of Staphylococcus aureus (strain JH1).